A 352-amino-acid polypeptide reads, in one-letter code: ER-derived vesicles protein ERV41 (352 aa).

At 1–23 (MAGLKTFDAFPKTEEQYKKKSTK) the chain is on the cytoplasmic side. The chain crosses the membrane as a helical span at residues 24-44 (GGLTSLLTYLFLLFIAWTEFG). The Lumenal segment spans residues 45 to 311 (EYFGGYIDQQ…FLVRLVAICS (267 aa)). A helical transmembrane segment spans residues 312 to 332 (FLVYCASWIFTLLDMALITIM). At 333–352 (GPKWSLRYQPDDKTKGILDR) the chain is on the cytoplasmic side. The short motif at 349–350 (IL) is the Isoleucine-leucine motif element.

It belongs to the ERGIC family. In terms of assembly, interacts with ERV46.

It is found in the endoplasmic reticulum membrane. The protein localises to the golgi apparatus membrane. It localises to the cytoplasmic vesicle. Its subcellular location is the COPII-coated vesicle membrane. Its function is as follows. Constituent of COPII-coated endoplasmic reticulum-derived transport vesicles. Required for efficient transport of a subset of secretory proteins to the Golgi. The C-terminal Ile-Leu motif is required for exit from the endoplasmic reticulum. Facilitates retrograde transport from the Golgi to the endoplasmic reticulum. In Saccharomyces cerevisiae (strain ATCC 204508 / S288c) (Baker's yeast), this protein is ER-derived vesicles protein ERV41 (ERV41).